The sequence spans 298 residues: Protease HtpX homolog (298 aa).

Transmembrane regions (helical) follow at residues 15–35 (YVMIGFAILVLFIGAAVGYVF) and 39–59 (AMAGIIMAAVIAAIYMAMMIA). H143 contacts Zn(2+). The active site involves E144. H147 contributes to the Zn(2+) binding site. The next 2 helical transmembrane spans lie at 158–178 (IALALSSAIAMLVNIGMRSFW) and 197–217 (IVMMIISIVLVILGPIATTIA). E226 serves as a coordination point for Zn(2+).

Belongs to the peptidase M48B family. The cofactor is Zn(2+).

It is found in the cell membrane. This Pediococcus pentosaceus (strain ATCC 25745 / CCUG 21536 / LMG 10740 / 183-1w) protein is Protease HtpX homolog.